An 817-amino-acid chain; its full sequence is V-type proton ATPase subunit a1 (817 aa).

Over 1–422 (MEEFLDKLPQ…PAVYSVVTYP (422 aa)) the chain is Cytoplasmic. A coiled-coil region spans residues 97 to 133 (DIALGDLERQLADHEHEVLEMNSNSEKLRQTYNELLE). The chain crosses the membrane as a helical span at residues 423 to 443 (FLFAVMFGDWGHGLCLLLGAL). At 444–468 (YLLARERKLSTQKLGSFMEMLFGGR) the chain is on the vacuolar side. Residues 469–489 (YVILLMALFSIYCGLIYNEFF) form a helical membrane-spanning segment. At 490 to 547 (SVPFHIFGGSAYKCRDTTCSDAYTVGLIKYRDPYPFGVDPSWRGSRTELPYLNSLKMK) the chain is on the cytoplasmic side. The chain crosses the membrane as a helical span at residues 548–568 (MSILLGIAQMNLGLILSFFNA). The Vacuolar portion of the chain corresponds to 569 to 580 (RFFGSSLDIRYQ). A helical transmembrane segment spans residues 581–601 (FIPQMIFLNSLFGYLSLLIII). Residues 602–639 (KWCTGSQADLYHVMIYMFLSPTEELGENELFWGQRPLQ) lie on the Cytoplasmic side of the membrane. The helical transmembrane segment at 640–660 (IVLLLLAFIAVPWMLFPKPFA) threads the bilayer. Residues 661 to 758 (LRKIHMERFQ…VLLLAWGYEN (98 aa)) are Vacuolar-facing. Residues 759–779 (ILIRLIGVAVFAFATAFILLM) traverse the membrane as a helical segment. Topologically, residues 780–817 (METLSAFLHALRLHWVEFMGKFFNGDGYKFKPFSFALI) are cytoplasmic.

Belongs to the V-ATPase 116 kDa subunit family. As to quaternary structure, V-ATPase is a heteromultimeric enzyme composed of a peripheral catalytic V1 complex (components A to H) attached to an integral membrane V0 proton pore complex (components: a, c, c'', d and e).

Its subcellular location is the vacuole membrane. The protein resides in the golgi apparatus. It is found in the trans-Golgi network membrane. Essential component of the vacuolar proton pump (V-ATPase), a multimeric enzyme that catalyzes the translocation of protons across the membranes. Required for assembly and activity of the V-ATPase. Required during cell expansion. The protein is V-type proton ATPase subunit a1 of Arabidopsis thaliana (Mouse-ear cress).